Consider the following 295-residue polypeptide: Small ribosomal subunit protein uS2 (295 aa).

At Ser-2 the chain carries N-acetylserine. Residue Ser-43 is modified to Phosphoserine. Position 52 is an N6-acetyllysine (Lys-52). An interaction with PPP1R16B region spans residues 54–113; that stretch reads TWEKLLLAARAIVAIENPADVSVISSRNTGQRAVLKFAAATGATPIAGRFTPGTFTNQIQ. The residue at position 89 (Lys-89) is an N6-acetyllysine; alternate. A Glycyl lysine isopeptide (Lys-Gly) (interchain with G-Cter in SUMO2); alternate cross-link involves residue Lys-89. The residue at position 97 (Thr-97) is a Phosphothreonine. 2 laminin-binding regions span residues 161-180 and 205-229; these read IPCNNKGAHSVGLMWWMLAR and RDPEEIEKEEQAAAEKAVTKEEFQG. 5 [DE]-W-[ST] repeats span residues 230 to 232, 247 to 249, 266 to 268, 275 to 277, and 293 to 295; these read EWT, DWS, and EWS. The laminin-binding stretch occupies residues 242 to 295; sequence QPEVADWSEGVQVPSVPIQQFPTEDWSAQPTTEDWSAAPTAQATEWVGTTTEWS. The interval 266–295 is disordered; it reads DWSAQPTTEDWSAAPTAQATEWVGTTTEWS.

It belongs to the universal ribosomal protein uS2 family. In terms of assembly, monomer (37LRP) and homodimer (67LR). Component of the small ribosomal subunit. Mature ribosomes consist of a small (40S) and a large (60S) subunit. The 40S subunit contains about 33 different proteins and 1 molecule of RNA (18S). The 60S subunit contains about 49 different proteins and 3 molecules of RNA (28S, 5.8S and 5S). Interacts with RPS21. Interacts with several laminins including at least LAMB1. Interacts with MDK. The mature dimeric form interacts with PPP1R16B (via its fourth ankyrin repeat). Interacts with PPP1CA only in the presence of PPP1R16B. Acylated. Acylation may be a prerequisite for conversion of the monomeric 37 kDa laminin receptor precursor (37LRP) to the mature dimeric 67 kDa laminin receptor (67LR), and may provide a mechanism for membrane association. In terms of processing, cleaved by stromelysin-3 (ST3) at the cell surface. Cleavage by stromelysin-3 may be a mechanism to alter cell-extracellular matrix interactions.

The protein resides in the cell membrane. The protein localises to the cytoplasm. It is found in the nucleus. In terms of biological role, required for the assembly and/or stability of the 40S ribosomal subunit. Required for the processing of the 20S rRNA-precursor to mature 18S rRNA in a late step of the maturation of 40S ribosomal subunits. Also functions as a cell surface receptor for laminin. Plays a role in cell adhesion to the basement membrane and in the consequent activation of signaling transduction pathways. May play a role in cell fate determination and tissue morphogenesis. Also acts as a receptor for several other ligands, including the pathogenic prion protein, viruses, and bacteria. Acts as a PPP1R16B-dependent substrate of PPP1CA. The protein is Small ribosomal subunit protein uS2 of Sus scrofa (Pig).